We begin with the raw amino-acid sequence, 208 residues long: Small ribosomal subunit protein uS4 (208 aa).

The region spanning 98–160 is the S4 RNA-binding domain; sequence QRLDNVVYRM…SKNNSQIVRA (63 aa).

The protein belongs to the universal ribosomal protein uS4 family. Part of the 30S ribosomal subunit. Contacts protein S5. The interaction surface between S4 and S5 is involved in control of translational fidelity.

Its function is as follows. One of the primary rRNA binding proteins, it binds directly to 16S rRNA where it nucleates assembly of the body of the 30S subunit. In terms of biological role, with S5 and S12 plays an important role in translational accuracy. The polypeptide is Small ribosomal subunit protein uS4 (Sulfurimonas denitrificans (strain ATCC 33889 / DSM 1251) (Thiomicrospira denitrificans (strain ATCC 33889 / DSM 1251))).